A 453-amino-acid chain; its full sequence is Glutamyl-tRNA(Gln) amidotransferase subunit A (453 aa).

Residues Lys56 and Ser131 each act as charge relay system in the active site. The active-site Acyl-ester intermediate is the Ser155.

The protein belongs to the amidase family. GatA subfamily. Heterotrimer of A, B and C subunits.

The catalysed reaction is L-glutamyl-tRNA(Gln) + L-glutamine + ATP + H2O = L-glutaminyl-tRNA(Gln) + L-glutamate + ADP + phosphate + H(+). Functionally, allows the formation of correctly charged Gln-tRNA(Gln) through the transamidation of misacylated Glu-tRNA(Gln) in organisms which lack glutaminyl-tRNA synthetase. The reaction takes place in the presence of glutamine and ATP through an activated gamma-phospho-Glu-tRNA(Gln). This chain is Glutamyl-tRNA(Gln) amidotransferase subunit A, found in Campylobacter jejuni subsp. doylei (strain ATCC BAA-1458 / RM4099 / 269.97).